The chain runs to 228 residues: Lipoprotein-releasing system ATP-binding protein LolD (228 aa).

The ABC transporter domain maps to 6–227 (LELLGIDRTY…LKDGKLIDYV (222 aa)). 42 to 49 (GPSGSGKS) lines the ATP pocket.

It belongs to the ABC transporter superfamily. Lipoprotein translocase (TC 3.A.1.125) family. The complex is composed of two ATP-binding proteins (LolD) and two transmembrane proteins (LolC and LolE).

It localises to the cell inner membrane. Part of the ABC transporter complex LolCDE involved in the translocation of mature outer membrane-directed lipoproteins, from the inner membrane to the periplasmic chaperone, LolA. Responsible for the formation of the LolA-lipoprotein complex in an ATP-dependent manner. This is Lipoprotein-releasing system ATP-binding protein LolD from Hyphomonas neptunium (strain ATCC 15444).